We begin with the raw amino-acid sequence, 152 residues long: Allergen Asp f 15 (152 aa).

Residues 1–19 (MKFTTPISLISLFVSSALA) form the signal peptide. 2 disulfides stabilise this stretch: Cys53–Cys90 and Cys93–Cys148.

The protein belongs to the cerato-platanin family.

It localises to the secreted. In Aspergillus fumigatus (strain ATCC MYA-4609 / CBS 101355 / FGSC A1100 / Af293) (Neosartorya fumigata), this protein is Allergen Asp f 15.